Reading from the N-terminus, the 257-residue chain is MDRIIEKLDHGWWVVSHEQKLWLPKGELPYGEAANFDLVGQRALQIGEWQGEPVWLVQQQRRHDMGSVRQVIDLDVGLFQLAGRGVQLAEFYRSHKYCGYCGHEMYPSKTEWAMLCSHCRERYYPQIAPCIIVAIRRDDSILLAQHTRHRNGVHTVLAGFVEVGETLEQAVAREVMEESGIKVKNLRYVTSQPWPFPQSLMTAFMAEYDSGDIVIDPKELLEANWYRYDDLPLLPPPGTVARRLIEDTVAMCRAEYE.

2 residues coordinate substrate: Lys25 and Arg69. Cys98 and Cys101 together coordinate Zn(2+). Glu111 contacts substrate. Zn(2+)-binding residues include Cys116 and Cys119. Residue Tyr124 participates in substrate binding. The region spanning 125-248 (PQIAPCIIVA…TVARRLIEDT (124 aa)) is the Nudix hydrolase domain. The a divalent metal cation site is built by Ala158, Glu174, and Glu178. A Nudix box motif is present at residues 159 to 180 (GFVEVGETLEQAVAREVMEESG). 192 to 199 (QPWPFPQS) is a binding site for substrate. Glu219 contributes to the a divalent metal cation binding site. Ala241 contributes to the substrate binding site.

Belongs to the Nudix hydrolase family. NudC subfamily. In terms of assembly, homodimer. The cofactor is Mg(2+). Mn(2+) serves as cofactor. It depends on Zn(2+) as a cofactor.

The enzyme catalyses a 5'-end NAD(+)-phospho-ribonucleoside in mRNA + H2O = a 5'-end phospho-adenosine-phospho-ribonucleoside in mRNA + beta-nicotinamide D-ribonucleotide + 2 H(+). It catalyses the reaction NAD(+) + H2O = beta-nicotinamide D-ribonucleotide + AMP + 2 H(+). It carries out the reaction NADH + H2O = reduced beta-nicotinamide D-ribonucleotide + AMP + 2 H(+). In terms of biological role, mRNA decapping enzyme that specifically removes the nicotinamide adenine dinucleotide (NAD) cap from a subset of mRNAs by hydrolyzing the diphosphate linkage to produce nicotinamide mononucleotide (NMN) and 5' monophosphate mRNA. The NAD-cap is present at the 5'-end of some mRNAs and stabilizes RNA against 5'-processing. Has preference for mRNAs with a 5'-end purine. Catalyzes the hydrolysis of a broad range of dinucleotide pyrophosphates. The chain is NAD-capped RNA hydrolase NudC from Escherichia coli (strain 55989 / EAEC).